A 691-amino-acid polypeptide reads, in one-letter code: Pleckstrin homology domain-containing family G member 7 (691 aa).

Disordered stretches follow at residues M1–S48 and T109–V140. Residues M313 to F488 enclose the DH domain. N-linked (GlcNAc...) asparagine glycosylation is present at N395. The PH domain maps to H535–S668.

This chain is Pleckstrin homology domain-containing family G member 7, found in Homo sapiens (Human).